Reading from the N-terminus, the 467-residue chain is Retinoic acid receptor RXR-alpha (467 aa).

Positions 1–61 (MDTKHFLPLD…LHSPISTLSS (61 aa)) are disordered. Positions 1–139 (MDTKHFLPLD…GNMSSFTKHI (139 aa)) are modulating. Lys-4 is covalently cross-linked (Glycyl lysine isopeptide (Lys-Gly) (interchain with G-Cter in SUMO2)). Residues Ser-22 and Ser-28 each carry the phosphoserine modification. Low complexity predominate over residues 32 to 55 (PSLHPSLGPGLGSPLGSPGQLHSP). Residues Ser-61 and Ser-75 each carry the phosphoserine; by MAPK8 and MAPK9 modification. A disordered region spans residues 79 to 109 (PHSMSVPTTPTLGFETGSPQLNSPMNPVSSS). Residues 83-109 (SVPTTPTLGFETGSPQLNSPMNPVSSS) are compositionally biased toward polar residues. Residue Thr-87 is modified to Phosphothreonine; by MAPK8 and MAPK9. Lys-113 participates in a covalent cross-link: Glycyl lysine isopeptide (Lys-Gly) (interchain with G-Cter in SUMO). Ser-134 carries the phosphoserine modification. 2 residues coordinate Zn(2+): Cys-140 and Cys-143. The NR C4-type zinc-finger motif lies at 140–160 (CAICGDRSSGKHYGVYSCEGC). The segment at residues 140–205 (CAICGDRSSG…RYQKCLAMGM (66 aa)) is a DNA-binding region (nuclear receptor). Position 150 is an N6-acetyllysine (Lys-150). Zn(2+) is bound by residues Cys-157 and Cys-160. Residues 165-170 (KRTVRK) form a nuclear localization signal region. Residues Cys-176, Cys-182, Cys-192, and Cys-195 each coordinate Zn(2+). An NR C4-type zinc finger spans residues 176–200 (CRDNKDCLIDKRQRNRCQYCRYQKC). Residues 206–229 (KREAVQEERQRGKDRNENEVESTS) are hinge. Residues 211-223 (QEERQRGKDRNEN) show a composition bias toward basic and acidic residues. The segment at 211 to 233 (QEERQRGKDRNENEVESTSSANE) is disordered. The NR LBD domain maps to 232–463 (NEDMPVEKIL…TFLMEMLEAP (232 aa)). Ser-264 carries the phosphoserine modification. Position 265 is a phosphoserine; by MAPK8 and MAPK9 (Ser-265). 2 residues coordinate 9-cis-retinoate: Arg-321 and Ala-332. The all-trans-retinoate site is built by Arg-321 and Ala-332. A required for nuclear export region spans residues 353–373 (RVLTELVSKMRDMQMDKTELG).

Belongs to the nuclear hormone receptor family. NR2 subfamily. As to quaternary structure, homodimer. Heterodimer (via C-terminus) with RARA; required for ligand-dependent retinoic acid receptor transcriptional activity; association with RARA is enhanced by pulsatile shear stress. Heterodimer with PPARA (via the leucine-like zipper in the LBD); the interaction is required for PPARA transcriptional activity. Heterodimerizes with PPARG. Heterodimerizes (via NR LBD) with RARB. Heterodimerizes with NR1H4; the heterodimerization enhances the binding affinity for LXXLL motifs from coactivators. Interacts with NCOA3 and NCOA6 coactivators. Interacts with FAM120B. Interacts with coactivator PELP1, SENP6, SFPQ, DNTTIP2 and RNF8. Interacts with PRMT2. Interacts with ASXL1. Interacts with BHLHE40/DEC1, BHLHE41/DEC2, MED1, NCOR1 and NCOR2. Interacts in a ligand-dependent fashion with MED1 and NCOA1. Interacts with VDR. Interacts with EP300; the interaction is decreased by 9-cis retinoic acid. Heterodimer (via C-terminus) with NR4A1 (DNA-binding domain); the interaction is enhanced by 9-cis retinoic acid. NR4A1 competes with EP300 for interaction with RXRA and thereby attenuates EP300 mediated acetylation of RXRA. In the absence of hormonal ligand, interacts with TACC1. Interacts ith IGFBP3. Phosphorylated on serine and threonine residues mainly in the N-terminal modulating domain. Constitutively phosphorylated on Ser-22 in the presence or absence of ligand. Under stress conditions, hyperphosphorylated by activated JNK on Ser-61, Ser-75, Thr-87 and Ser-265. Phosphorylated on Ser-28, in vitro, by PKA. This phosphorylation is required for repression of cAMP-mediated transcriptional activity of RARA. Post-translationally, ubiquitinated by UBR5, leading to its degradation: UBR5 specifically recognizes and binds ligand-bound RXRA when it is not associated with coactivators (NCOAs). In presence of NCOAs, the UBR5-degron is not accessible, preventing its ubiquitination and degradation. In terms of processing, sumoylation negatively regulates transcriptional activity. Desumoylated specifically by SENP6. Acetylated by EP300; acetylation enhances DNA binding and transcriptional activity. In terms of tissue distribution, expressed in the adrenal gland with main expression in the zona fasciculata and medulla (at protein level). Expressed in aortic endothelial cells, with high expression in the descending thoracic aorta and the outer curvature of the aortic arch, where pulsatory shear stress exists, but very low in the inner curvature of the aortic arch, where oscillatory shear stress prevails (at protein level).

It is found in the nucleus. The protein resides in the cytoplasm. Its subcellular location is the mitochondrion. In terms of biological role, receptor for retinoic acid that acts as a transcription factor. Forms homo- or heterodimers with retinoic acid receptors (RARs) and binds to target response elements in response to their ligands, all-trans or 9-cis retinoic acid, to regulate gene expression in various biological processes. The RAR/RXR heterodimers bind to the retinoic acid response elements (RARE) composed of tandem 5'-AGGTCA-3' sites known as DR1-DR5 to regulate transcription. The high affinity ligand for retinoid X receptors (RXRs) is 9-cis retinoic acid. In the absence of ligand, the RXR-RAR heterodimers associate with a multiprotein complex containing transcription corepressors that induce histone deacetylation, chromatin condensation and transcriptional suppression. On ligand binding, the corepressors dissociate from the receptors and coactivators are recruited leading to transcriptional activation. Serves as a common heterodimeric partner for a number of nuclear receptors, such as RARA, RARB and PPARA. The RXRA/RARB heterodimer can act as a transcriptional repressor or transcriptional activator, depending on the RARE DNA element context. The RXRA/PPARA heterodimer is required for PPARA transcriptional activity on fatty acid oxidation genes such as ACOX1 and the P450 system genes. Together with RARA, positively regulates microRNA-10a expression, thereby inhibiting the GATA6/VCAM1 signaling response to pulsatile shear stress in vascular endothelial cells. Acts as an enhancer of RARA binding to RARE DNA element. May facilitate the nuclear import of heterodimerization partners such as VDR and NR4A1. Promotes myelin debris phagocytosis and remyelination by macrophages. Plays a role in the attenuation of the innate immune system in response to viral infections, possibly by negatively regulating the transcription of antiviral genes such as type I IFN genes. Involved in the regulation of calcium signaling by repressing ITPR2 gene expression, thereby controlling cellular senescence. The polypeptide is Retinoic acid receptor RXR-alpha (Rxra) (Rattus norvegicus (Rat)).